The following is a 479-amino-acid chain: MSKKLYIKTWGCQMNEYDSTKMAELLHSTHGYDVAEEAEDADLILLNTCSIREKAQEKVFHQLGRWKNLKKNNPNLLIGVGGCVASQEGNEIRARAPFVDIIFGPQTLHRLPEMVNQVSETHAPMVDVSFPEIEKFDRLAEPKADGASAFVSIMEGCSKYCSFCVVPYTRGEEVSRPVDDVIYEIAQLAEQGVREVNLLGQNVNAYRGEHYDGEVCRFAELLHLVAAIDGIDRIRYTTSHPVEFTDDITEAYKTIPELVSHLHLPVQSGSDRILTMMKRGHTALEYKSKIRALKKARPDIAMSSDFIIGFPGESDADFEATMDLIQSIDFDMSFSFIYSARPGTPAADLPDDISEETKKKRLQLLQQRLNQQSMAHARRMLETEQRILVTGPSKKNPMELTGRTENNRVVNFVGQPHMIGQFVDVRITEVLPNSLRGELIREEADMGLRVDTAPEIILQRGKSSEPDELGVVRMPRQAS.

The MTTase N-terminal domain maps to lysine 3 to glutamate 120. 6 residues coordinate [4Fe-4S] cluster: cysteine 12, cysteine 49, cysteine 83, cysteine 157, cysteine 161, and cysteine 164. The Radical SAM core domain maps to lysine 143–alanine 375. The TRAM domain occupies arginine 378–arginine 441.

This sequence belongs to the methylthiotransferase family. MiaB subfamily. In terms of assembly, monomer. It depends on [4Fe-4S] cluster as a cofactor.

It is found in the cytoplasm. The enzyme catalyses N(6)-dimethylallyladenosine(37) in tRNA + (sulfur carrier)-SH + AH2 + 2 S-adenosyl-L-methionine = 2-methylsulfanyl-N(6)-dimethylallyladenosine(37) in tRNA + (sulfur carrier)-H + 5'-deoxyadenosine + L-methionine + A + S-adenosyl-L-homocysteine + 2 H(+). Catalyzes the methylthiolation of N6-(dimethylallyl)adenosine (i(6)A), leading to the formation of 2-methylthio-N6-(dimethylallyl)adenosine (ms(2)i(6)A) at position 37 in tRNAs that read codons beginning with uridine. This chain is tRNA-2-methylthio-N(6)-dimethylallyladenosine synthase, found in Idiomarina loihiensis (strain ATCC BAA-735 / DSM 15497 / L2-TR).